A 308-amino-acid polypeptide reads, in one-letter code: Eukaryotic translation initiation factor 3 subunit G-B (308 aa).

Disordered regions lie at residues 1–35 (MPTGDYDSKPSWADQVEEEGIDVEPLSPQIKKQDP) and 176–227 (STAD…DDNA). The span at 185–194 (GAEPEPAQAP) shows a compositional bias: low complexity. Basic and acidic residues predominate over residues 209–227 (GGSRRGESMQPNRRADDNA). Residues 227-305 (ATIRVTNLSE…LILNVEWAKP (79 aa)) form the RRM domain.

This sequence belongs to the eIF-3 subunit G family. In terms of assembly, component of the eukaryotic translation initiation factor 3 (eIF-3) complex, which is composed of 13 subunits: eif3a, eif3b, eif3c, eif3d, eif3e, eif3f, eif3g, eif3h, eif3i, eif3j, eif3k, eif3l and eif3m.

The protein localises to the cytoplasm. Its function is as follows. RNA-binding component of the eukaryotic translation initiation factor 3 (eIF-3) complex, which is involved in protein synthesis of a specialized repertoire of mRNAs and, together with other initiation factors, stimulates binding of mRNA and methionyl-tRNAi to the 40S ribosome. The eIF-3 complex specifically targets and initiates translation of a subset of mRNAs involved in cell proliferation. This subunit can bind 18S rRNA. The polypeptide is Eukaryotic translation initiation factor 3 subunit G-B (eif3g-b) (Xenopus laevis (African clawed frog)).